Consider the following 483-residue polypeptide: ATP synthase subunit beta, chloroplastic (483 aa).

An ATP-binding site is contributed by 163–170 (GGAGVGKT).

Belongs to the ATPase alpha/beta chains family. As to quaternary structure, F-type ATPases have 2 components, CF(1) - the catalytic core - and CF(0) - the membrane proton channel. CF(1) has five subunits: alpha(3), beta(3), gamma(1), delta(1), epsilon(1). CF(0) has four main subunits: a(1), b(1), b'(1) and c(9-12).

It is found in the plastid. The protein localises to the chloroplast thylakoid membrane. The enzyme catalyses ATP + H2O + 4 H(+)(in) = ADP + phosphate + 5 H(+)(out). Its function is as follows. Produces ATP from ADP in the presence of a proton gradient across the membrane. The catalytic sites are hosted primarily by the beta subunits. The polypeptide is ATP synthase subunit beta, chloroplastic (Ostreococcus tauri).